The sequence spans 49 residues: Osteocalcin (49 aa).

In terms of domain architecture, Gla spans 1–47 (YLDHGLGAPAPYVDPLEPKREVCELNPDCDELADQMGFQEAYRRFYG). Pro-9 is modified (4-hydroxyproline). Ca(2+)-binding residues include Glu-17, Glu-21, Glu-24, and Asp-30. 4-carboxyglutamate is present on residues Glu-17, Glu-21, and Glu-24. An intrachain disulfide couples Cys-23 to Cys-29.

Belongs to the osteocalcin/matrix Gla protein family. Post-translationally, gamma-carboxyglutamic acid residues are formed by vitamin K dependent carboxylation. These residues are essential for the binding of calcium.

It is found in the secreted. Functionally, the carboxylated form is one of the main organic components of the bone matrix, which constitutes 1-2% of the total bone protein: it acts as a negative regulator of bone formation and is required to limit bone formation without impairing bone resorption or mineralization. The carboxylated form binds strongly to apatite and calcium. Its function is as follows. The uncarboxylated form acts as a hormone secreted by osteoblasts, which regulates different cellular processes, such as energy metabolism, male fertility and brain development. Regulates of energy metabolism by acting as a hormone favoring pancreatic beta-cell proliferation, insulin secretion and sensitivity and energy expenditure. Uncarboxylated osteocalcin hormone also promotes testosterone production in the testes: acts as a ligand for G protein-coupled receptor GPRC6A at the surface of Leydig cells, initiating a signaling response that promotes the expression of enzymes required for testosterone synthesis in a CREB-dependent manner. Also acts as a regulator of brain development: osteocalcin hormone crosses the blood-brain barrier and acts as a ligand for GPR158 on neurons, initiating a signaling response that prevents neuronal apoptosis in the hippocampus, favors the synthesis of all monoamine neurotransmitters and inhibits that of gamma-aminobutyric acid (GABA). Osteocalcin also crosses the placenta during pregnancy and maternal osteocalcin is required for fetal brain development. This is Osteocalcin from Lama guanicoe (Guanaco).